We begin with the raw amino-acid sequence, 345 residues long: D-alanine--D-alanine ligase (345 aa).

Positions 137 to 342 (KAAFSAAGLP…LEELVHQLLE (206 aa)) constitute an ATP-grasp domain. An ATP-binding site is contributed by 169–224 (ETQLGYPCFIKPANLGSSVGISKATNRSELQAGLDLAASHDSRLLVEKGLQVRELE). The Mg(2+) site is built by Asp295, Glu309, and Asn311.

It belongs to the D-alanine--D-alanine ligase family. It depends on Mg(2+) as a cofactor. Mn(2+) serves as cofactor.

It localises to the cytoplasm. It catalyses the reaction 2 D-alanine + ATP = D-alanyl-D-alanine + ADP + phosphate + H(+). The protein operates within cell wall biogenesis; peptidoglycan biosynthesis. Functionally, cell wall formation. The protein is D-alanine--D-alanine ligase of Synechococcus sp. (strain RCC307).